Reading from the N-terminus, the 191-residue chain is MEFLVQKIGMSRTIDANSTPVTLLKVLQAKVCQLENGKALVAYAMHKKHNKAIEGQQKKYQLSKEFNHFATLKASQQKELGDLDLSALETLKRVKASFKTKGRGFAGVMKRWNFQGGPAAHGSRFHRRPGSIGNREWPGRVQKGRKMAGHYGNELVTCQNEVLSFDKESMVLVLKGSVAGFSGAYGRIRAV.

Positions 119-138 (AAHGSRFHRRPGSIGNREWP) are disordered.

It belongs to the universal ribosomal protein uL3 family. In terms of assembly, part of the 50S ribosomal subunit. Forms a cluster with proteins L14 and L19.

One of the primary rRNA binding proteins, it binds directly near the 3'-end of the 23S rRNA, where it nucleates assembly of the 50S subunit. The chain is Large ribosomal subunit protein uL3 (rplC) from Helicobacter pylori (strain ATCC 700392 / 26695) (Campylobacter pylori).